The primary structure comprises 471 residues: tRNA(Ile)-lysidine synthase (471 aa).

35–40 (SGGADS) contacts ATP.

This sequence belongs to the tRNA(Ile)-lysidine synthase family.

Its subcellular location is the cytoplasm. It carries out the reaction cytidine(34) in tRNA(Ile2) + L-lysine + ATP = lysidine(34) in tRNA(Ile2) + AMP + diphosphate + H(+). Functionally, ligates lysine onto the cytidine present at position 34 of the AUA codon-specific tRNA(Ile) that contains the anticodon CAU, in an ATP-dependent manner. Cytidine is converted to lysidine, thus changing the amino acid specificity of the tRNA from methionine to isoleucine. This is tRNA(Ile)-lysidine synthase from Geobacter sulfurreducens (strain ATCC 51573 / DSM 12127 / PCA).